The chain runs to 352 residues: C-C chemokine receptor type 5 (352 aa).

The Extracellular portion of the chain corresponds to 1 to 30; that stretch reads MDYQVSSPTYDIDYYTSEPCQKTNVKQIAA. A Sulfotyrosine modification is found at Y3. 2 O-linked (GalNAc...) serine glycosylation sites follow: S6 and S7. Y10, Y14, and Y15 each carry sulfotyrosine. 2 disulfides stabilise this stretch: C20–C269 and C101–C178. The chain crosses the membrane as a helical span at residues 31-58; that stretch reads RLLPPLYSLVFIFGFVGNMLVILILINC. Over 59 to 68 the chain is Cytoplasmic; it reads KRLKSMTDIY. Residues 69–89 form a helical membrane-spanning segment; it reads LLNLAISDLFFLLTVPFWAHY. Residues 90-102 are Extracellular-facing; sequence AAAQWDFGNTMCQ. Residues 103–124 traverse the membrane as a helical segment; the sequence is LLTGLYFIGFFSGIFFIILLTI. Over 125-141 the chain is Cytoplasmic; it reads DRYLAIVHAVFALKART. Residues 142–166 form a helical membrane-spanning segment; that stretch reads VTFGVVTSVITWVVAVFASLPGIIF. The Extracellular portion of the chain corresponds to 167–198; the sequence is TRSQKEGLHYTCSSHFPYSQYQFWKNFQTLKI. A helical transmembrane segment spans residues 199–218; the sequence is VILGLVLPLLVMVICYSGIL. Over 219 to 235 the chain is Cytoplasmic; it reads KTLLRCRNEKKRHRAVR. The chain crosses the membrane as a helical span at residues 236 to 260; that stretch reads LIFTIMIVYFLFWAPYNIVLLLNTF. Residues 261 to 277 lie on the Extracellular side of the membrane; it reads QEFFGLNNCSSSNRLDQ. Residues 278–301 form a helical membrane-spanning segment; that stretch reads AMQVTETLGMTHCCINPIIYAFVG. Over 302–352 the chain is Cytoplasmic; it reads EKFRNYLLVFFQKHIAKRFCKCCSIFQQEAPERASSVYTRSTGEQEISVGL. S-palmitoyl cysteine attachment occurs at residues C321, C323, and C324. Phosphoserine; by BARK1 is present on residues S336, S337, S342, and S349.

The protein belongs to the G-protein coupled receptor 1 family. As to quaternary structure, interacts with PRAF2. Efficient ligand binding to CCL3/MIP-1alpha and CCL4/MIP-1beta requires sulfation, O-glycosylation and sialic acid modifications. Glycosylation on Ser-6 is required for efficient binding of CCL4. Interacts with GRK2. Interacts with ARRB1 and ARRB2. Interacts with CNIH4. Interacts with S100A4; this interaction stimulates T-lymphocyte chemotaxis. In terms of processing, sulfated on at least 2 of the N-terminal tyrosines. Sulfation is required for efficient binding of the chemokines, CCL3 and CCL4. Palmitoylation in the C-terminal is important for cell surface expression. Post-translationally, phosphorylation on serine residues in the C-terminal is stimulated by binding CC chemokines especially by APO-RANTES. In terms of processing, O-glycosylated, but not N-glycosylated. Ser-6 appears to be the major site even if Ser-7 may be also O-glycosylated. Also sialylated glycans present which contribute to chemokine binding. Thr-16 and Ser-17 may also be glycosylated and, if so, with small moieties such as a T-antigen.

The protein localises to the cell membrane. Receptor for a number of inflammatory CC-chemokines including CCL3/MIP-1-alpha, CCL4/MIP-1-beta and RANTES and subsequently transduces a signal by increasing the intracellular calcium ion level. May play a role in the control of granulocytic lineage proliferation or differentiation. Participates in T-lymphocyte migration to the infection site by acting as a chemotactic receptor. This chain is C-C chemokine receptor type 5 (CCR5), found in Gorilla gorilla gorilla (Western lowland gorilla).